The sequence spans 294 residues: Elongation factor Ts (294 aa).

The tract at residues threonine 81 to valine 84 is involved in Mg(2+) ion dislocation from EF-Tu.

Belongs to the EF-Ts family.

The protein localises to the cytoplasm. Functionally, associates with the EF-Tu.GDP complex and induces the exchange of GDP to GTP. It remains bound to the aminoacyl-tRNA.EF-Tu.GTP complex up to the GTP hydrolysis stage on the ribosome. This Levilactobacillus brevis (strain ATCC 367 / BCRC 12310 / CIP 105137 / JCM 1170 / LMG 11437 / NCIMB 947 / NCTC 947) (Lactobacillus brevis) protein is Elongation factor Ts.